Consider the following 570-residue polypeptide: MEFKYNGKVESVELNKYSKTLTQDPTQPATQAMYYGIGFKDEDFKKAQVGIVSMDWDGNPCNMHLGTLGSKIKSSVNQTDGLIGLQFHTIGVSDGIANGKLGMRYSLVSREVIADSIETNAGAEYYDAIVAIPGCDKNMPGSIIGMARLNRPSIMVYGGTIEHGEYKGEKLNIVSAFESLGQKITGNISDEDYHGVICNAIPGQGACGGMYTANTLAAAIETLGMSLPYSSSNPAVSQEKQEECDEIGLAIKNLLEKDIKPSDIMTKEAFENAITIVMVLGGSTNAVLHIIAMANAIGVEITQDDFQRISDITPVLGDFKPSGKYMMEDLHKIGGLPAVLKYLLKEGKLHGDCLTVTGKTLAENVETALDLDFDSQDIMRPLKNPIKATGHLQILYGNLAQGGSVAKISGKEGEFFKGTARVFDGEQHFIDGIESGRLHAGDVAVIRNIGPVGGPGMPEMLKPTSALIGAGLGKSCALITDGRFSGGTHGFVVGHIVPEAVEGGLIGLVEDDDIIEIDAVNNSISLKVSDEEIAKRRANYQKPTPKATRGVLAKFAKLTRPASEGCVTDL.

Cys-61 contributes to the [2Fe-2S] cluster binding site. Position 94 (Asp-94) interacts with Mg(2+). Cys-135 provides a ligand contact to [2Fe-2S] cluster. Mg(2+) contacts are provided by Asp-136 and Lys-137. Position 137 is an N6-carboxylysine (Lys-137). Cys-207 is a [2Fe-2S] cluster binding site. Glu-459 contributes to the Mg(2+) binding site. Catalysis depends on Ser-485, which acts as the Proton acceptor.

This sequence belongs to the IlvD/Edd family. In terms of assembly, homodimer. The cofactor is [2Fe-2S] cluster. Mg(2+) serves as cofactor.

It carries out the reaction (2R)-2,3-dihydroxy-3-methylbutanoate = 3-methyl-2-oxobutanoate + H2O. It catalyses the reaction (2R,3R)-2,3-dihydroxy-3-methylpentanoate = (S)-3-methyl-2-oxopentanoate + H2O. The protein operates within amino-acid biosynthesis; L-isoleucine biosynthesis; L-isoleucine from 2-oxobutanoate: step 3/4. Its pathway is amino-acid biosynthesis; L-valine biosynthesis; L-valine from pyruvate: step 3/4. Functions in the biosynthesis of branched-chain amino acids. Catalyzes the dehydration of (2R,3R)-2,3-dihydroxy-3-methylpentanoate (2,3-dihydroxy-3-methylvalerate) into 2-oxo-3-methylpentanoate (2-oxo-3-methylvalerate) and of (2R)-2,3-dihydroxy-3-methylbutanoate (2,3-dihydroxyisovalerate) into 2-oxo-3-methylbutanoate (2-oxoisovalerate), the penultimate precursor to L-isoleucine and L-valine, respectively. The chain is Dihydroxy-acid dehydratase from Lactococcus lactis subsp. lactis (strain IL1403) (Streptococcus lactis).